A 177-amino-acid polypeptide reads, in one-letter code: dCTP deaminase, dUMP-forming (177 aa).

DCTP contacts are provided by residues 98 to 103 (RSSVGR), N110, 115 to 118 (DPGF), 123 to 125 (TLE), Q144, 157 to 160 (YQGK), and Q164. E125 serves as the catalytic Proton donor/acceptor.

The protein belongs to the dCTP deaminase family. In terms of assembly, homotrimer. The cofactor is Mg(2+).

The enzyme catalyses dCTP + 2 H2O = dUMP + NH4(+) + diphosphate. It participates in pyrimidine metabolism; dUMP biosynthesis; dUMP from dCTP: step 1/1. Inhibited by dTTP. Its function is as follows. Bifunctional enzyme that catalyzes both the deamination of dCTP to dUTP and the hydrolysis of dUTP to dUMP without releasing the toxic dUTP intermediate. This Halalkalibacterium halodurans (strain ATCC BAA-125 / DSM 18197 / FERM 7344 / JCM 9153 / C-125) (Bacillus halodurans) protein is dCTP deaminase, dUMP-forming.